The sequence spans 500 residues: Lysine--tRNA ligase (500 aa).

Positions 411 and 418 each coordinate Mg(2+).

Belongs to the class-II aminoacyl-tRNA synthetase family. As to quaternary structure, homodimer. Requires Mg(2+) as cofactor.

The protein resides in the cytoplasm. The catalysed reaction is tRNA(Lys) + L-lysine + ATP = L-lysyl-tRNA(Lys) + AMP + diphosphate. This Azoarcus sp. (strain BH72) protein is Lysine--tRNA ligase.